The primary structure comprises 263 residues: Acyl-[acyl-carrier-protein]--UDP-N-acetylglucosamine O-acyltransferase (263 aa).

The protein belongs to the transferase hexapeptide repeat family. LpxA subfamily. As to quaternary structure, homotrimer.

It localises to the cytoplasm. The catalysed reaction is a (3R)-hydroxyacyl-[ACP] + UDP-N-acetyl-alpha-D-glucosamine = a UDP-3-O-[(3R)-3-hydroxyacyl]-N-acetyl-alpha-D-glucosamine + holo-[ACP]. Its pathway is glycolipid biosynthesis; lipid IV(A) biosynthesis; lipid IV(A) from (3R)-3-hydroxytetradecanoyl-[acyl-carrier-protein] and UDP-N-acetyl-alpha-D-glucosamine: step 1/6. In terms of biological role, involved in the biosynthesis of lipid A, a phosphorylated glycolipid that anchors the lipopolysaccharide to the outer membrane of the cell. This chain is Acyl-[acyl-carrier-protein]--UDP-N-acetylglucosamine O-acyltransferase, found in Stenotrophomonas maltophilia (strain K279a).